Consider the following 2004-residue polypeptide: Histone acetyltransferase KAT6A (2004 aa).

The region spanning 1–77 is the SAMD1-like winged helix (WH) domain; that stretch reads MVKLANPLYT…LNSYKDPDNP (77 aa). A required for activation of RUNX1-1 region spans residues 1 to 144; sequence MVKLANPLYT…FGGSAASGFH (144 aa). A required for nuclear localization region spans residues 52–166; sequence ELSVKDGTIL…HGRLLKDGPL (115 aa). Residues 95–171 form the H15 domain; it reads QNVDWNKLIK…KDGPLYRLNT (77 aa). The tract at residues 144–664 is interaction with PML; that stretch reads HQQLRLAIKR…RKGYGRFLID (521 aa). N6-acetyllysine is present on K172. PHD-type zinc fingers lie at residues 206-265 and 259-313; these read IPIC…CKTC and CIEC…CRPR. The segment at 312–664 is interaction with RUNX1-1; it reads PRKKGRKLLQ…RKGYGRFLID (353 aa). A disordered region spans residues 334–375; sequence PIGRPKNRLKKQNTVSKGPFSKVRTGPGRGRKRKITLSSQSA. Residues K350 and K355 each carry the N6-acetyllysine modification. T369 carries the post-translational modification Phosphothreonine; by PKB/AKT1. S420 carries the phosphoserine modification. The disordered stretch occupies residues 441-464; that stretch reads KRGNRKSSTSDWPTDNQDGWDGKQ. Positions 446–457 are enriched in polar residues; sequence KSSTSDWPTDNQ. S473 is modified (phosphoserine). A catalytic region spans residues 488 to 778; it reads IQEQALQKVG…VDPECLRWTP (291 aa). The MYST-type HAT domain occupies 504-778; that stretch reads PQVRCPSVIE…VDPECLRWTP (275 aa). Residues 507-810 form a mediates interaction with BRPF1, required for histone H3 acetyltransferase activity region; the sequence is RCPSVIEFGK…EPQCQERELE (304 aa). The C2HC MYST-type zinc finger occupies 537–562; the sequence is LYLCEFCLKYMKSRTILQQHMKKCGW. At K604 the chain carries N6-acetyllysine; by autocatalysis. Acetyl-CoA is bound by residues 645 to 649 and 654 to 660; these read SCIMI and QRKGYGR. The active-site Proton donor/acceptor is E680. S684 is an acetyl-CoA binding site. 3 disordered regions span residues 785-1445, 1461-1621, and 1637-1721; these read VVSE…AYQD, QADE…MMQQ, and SCVV…MEIP. Phosphoserine is present on residues S787 and S812. Positions 787-803 are enriched in acidic residues; sequence SEEEEEEAEEGENEEPQ. N6-acetyllysine is present on K815. Residues 817 to 836 are compositionally biased toward basic and acidic residues; it reads VSHENKEQDSYSVESEKKPE. K834 participates in a covalent cross-link: Glycyl lysine isopeptide (Lys-Gly) (interchain with G-Cter in SUMO2). Residues 864 to 873 are compositionally biased toward basic residues; that stretch reads RRGRWGRKNR. Residues 874-888 are compositionally biased toward basic and acidic residues; that stretch reads KTQERFGDKDSKLLL. Position 899 is a phosphotyrosine (Y899). Composition is skewed to basic and acidic residues over residues 931 to 942 and 953 to 980; these read GKPDLPKRRLSE and KSPE…DRAV. Phosphoserine occurs at positions 941, 954, and 974. K1007 is modified (N6-acetyllysine). Residues 1009–1030 show a composition bias toward basic residues; it reads TLKRKKPFLHRRRRVRKRKHHN. Positions 1031–1042 are enriched in low complexity; that stretch reads SSVVTETISETT. Composition is skewed to acidic residues over residues 1043–1053 and 1065–1078; these read EVLDEPFEDSD and FEID…DENE. Phosphoserine is present on residues S1089, S1090, and S1113. Acidic residues predominate over residues 1107-1118; sequence EEEDEESDDADD. The span at 1146–1172 shows a compositional bias: basic residues; it reads LKKKKGWPKGKSRKPIHWKKRPGRKPG. The segment covering 1203–1223 has biased composition (basic and acidic residues); that stretch reads KIQESEETVEPKEDMPLPEER. The segment covering 1224 to 1245 has biased composition (acidic residues); the sequence is KEEEEMQAEAEEAEEGEEEDAA. Residues 1246–1262 are compositionally biased toward low complexity; sequence SSEVPAASPADSSNSPE. Over residues 1275-1287 the composition is skewed to basic and acidic residues; sequence EKPRVSEEQRQSE. Residues 1288–1305 show a composition bias toward acidic residues; that stretch reads EEQQELEEPEPEEEEDAA. Composition is skewed to basic and acidic residues over residues 1323–1345, 1358–1367, and 1398–1420; these read HLES…KEEP, KSREKIKDKE, and EDSH…HSEL. K1342 is covalently cross-linked (Glycyl lysine isopeptide (Lys-Gly) (interchain with G-Cter in SUMO2)). Residues 1481–1503 are compositionally biased toward low complexity; sequence SPISSVQSHPSQSVRSVSSPNVP. Residues 1508–1529 show a composition bias toward polar residues; that stretch reads GYTQISPEQGSLSAPSMQNMET. The interval 1517 to 1642 is interaction with RUNX1-2; the sequence is GSLSAPSMQN…KSPQSCVVER (126 aa). Residues 1517 to 1741 form an interaction with PML region; the sequence is GSLSAPSMQN…YERIPGDFGA (225 aa). Residues 1534-1548 are compositionally biased toward low complexity; the sequence is DVPSVSDHSQQVVDS. The segment covering 1556–1573 has biased composition (polar residues); the sequence is IESTTENYENPSSYDSTM. The span at 1574–1621 shows a compositional bias: low complexity; sequence GGSICGNSSSQSSCSYGGLSSSSSLTQSSCVVTQQMASMGSSCSMMQQ. A compositionally biased stretch (pro residues) spans 1650–1699; it reads QPPPPPPQQPQPPPPQPQPAPQPPPPQQQPQQQPQPQPQQPPPPPPPQQQ. The segment covering 1702-1712 has biased composition (polar residues); sequence LSQCSMNNSFT. Residues 1913–1948 are required for activation of RUNX1-2; that stretch reads SMNMNTLNAMNSYRMTQPMMNSSYHSNPAYMNQTAQ.

It belongs to the MYST (SAS/MOZ) family. Component of the MOZ/MORF complex composed at least of ING5, KAT6A, KAT6B, MEAF6 and one of BRPF1, BRD1/BRPF2 and BRPF3. Interacts with RUNX1; phosphorylation of RUNX1 enhances the interaction. Interacts with RUNX2. Interacts with p53/TP53. Interacts with PML (isoform PML-4) and this interaction positively regulates its acetylation activity towards p53/TP53. Autoacetylation at Lys-604 is required for proper function. Autoacetylated. In terms of processing, phosphorylation at Thr-369 by PKB/AKT1 inhibits its interaction with PML and negatively regulates its acetylation activity towards p53/TP53.

It is found in the nucleus. The protein resides in the nucleolus. The protein localises to the nucleoplasm. It localises to the PML body. The enzyme catalyses L-lysyl-[protein] + acetyl-CoA = N(6)-acetyl-L-lysyl-[protein] + CoA + H(+). Histone acetyltransferase that acetylates lysine residues in histone H3 and histone H4 (in vitro). Component of the MOZ/MORF complex which has a histone H3 acetyltransferase activity. May act as a transcriptional coactivator for RUNX1 and RUNX2. Acetylates p53/TP53 at 'Lys-120' and 'Lys-382' and controls its transcriptional activity via association with PML. This chain is Histone acetyltransferase KAT6A (KAT6A), found in Homo sapiens (Human).